A 182-amino-acid chain; its full sequence is Ribosome maturation factor RimM (182 aa).

In terms of domain architecture, PRC barrel spans 103 to 182 (EDDYYWKDLM…RVEVDWDPGF (80 aa)).

It belongs to the RimM family. In terms of assembly, binds ribosomal protein uS19.

It is found in the cytoplasm. Its function is as follows. An accessory protein needed during the final step in the assembly of 30S ribosomal subunit, possibly for assembly of the head region. Essential for efficient processing of 16S rRNA. May be needed both before and after RbfA during the maturation of 16S rRNA. It has affinity for free ribosomal 30S subunits but not for 70S ribosomes. The polypeptide is Ribosome maturation factor RimM (Yersinia pestis bv. Antiqua (strain Antiqua)).